A 77-amino-acid polypeptide reads, in one-letter code: Large ribosomal subunit protein bL31 (77 aa).

Residues cysteine 16, cysteine 18, cysteine 37, and cysteine 40 each coordinate Zn(2+).

It belongs to the bacterial ribosomal protein bL31 family. Type A subfamily. Part of the 50S ribosomal subunit. The cofactor is Zn(2+).

Binds the 23S rRNA. The protein is Large ribosomal subunit protein bL31 of Pseudomonas fluorescens (strain SBW25).